Consider the following 329-residue polypeptide: Signal recognition particle receptor FtsY (329 aa).

Residues 127-134 (GVNGVGKT), 209-213 (DTAGR), and 273-276 (TKLD) contribute to the GTP site.

It belongs to the GTP-binding SRP family. FtsY subfamily. As to quaternary structure, part of the signal recognition particle protein translocation system, which is composed of SRP and FtsY.

It is found in the cell membrane. It localises to the cytoplasm. The enzyme catalyses GTP + H2O = GDP + phosphate + H(+). In terms of biological role, involved in targeting and insertion of nascent membrane proteins into the cytoplasmic membrane. Acts as a receptor for the complex formed by the signal recognition particle (SRP) and the ribosome-nascent chain (RNC). The sequence is that of Signal recognition particle receptor FtsY from Bacillus subtilis (strain 168).